A 303-amino-acid polypeptide reads, in one-letter code: GTP cyclohydrolase FolE2 (303 aa).

The protein belongs to the GTP cyclohydrolase IV family.

The catalysed reaction is GTP + H2O = 7,8-dihydroneopterin 3'-triphosphate + formate + H(+). It participates in cofactor biosynthesis; 7,8-dihydroneopterin triphosphate biosynthesis; 7,8-dihydroneopterin triphosphate from GTP: step 1/1. Functionally, converts GTP to 7,8-dihydroneopterin triphosphate. The chain is GTP cyclohydrolase FolE2 from Exiguobacterium sp. (strain ATCC BAA-1283 / AT1b).